The chain runs to 128 residues: Ribonuclease P protein component (128 aa).

This sequence belongs to the RnpA family. In terms of assembly, consists of a catalytic RNA component (M1 or rnpB) and a protein subunit.

It carries out the reaction Endonucleolytic cleavage of RNA, removing 5'-extranucleotides from tRNA precursor.. Its function is as follows. RNaseP catalyzes the removal of the 5'-leader sequence from pre-tRNA to produce the mature 5'-terminus. It can also cleave other RNA substrates such as 4.5S RNA. The protein component plays an auxiliary but essential role in vivo by binding to the 5'-leader sequence and broadening the substrate specificity of the ribozyme. This Prochlorococcus marinus (strain MIT 9313) protein is Ribonuclease P protein component.